An 81-amino-acid polypeptide reads, in one-letter code: Three-finger toxin MALT0051C (81 aa).

An N-terminal signal peptide occupies residues Met-1–Thr-21. Disulfide bonds link Cys-24-Cys-43, Cys-38-Cys-60, Cys-62-Cys-73, and Cys-74-Cys-79.

This sequence belongs to the three-finger toxin family. Short-chain subfamily. Type I alpha-neurotoxin sub-subfamily. Expressed by the venom gland.

The protein localises to the secreted. Its function is as follows. Binds to muscle nicotinic acetylcholine receptor (nAChR) and inhibit acetylcholine from binding to the receptor, thereby impairing neuromuscular transmission. The polypeptide is Three-finger toxin MALT0051C (Micrurus altirostris (Uruguayan coral snake)).